A 109-amino-acid polypeptide reads, in one-letter code: Aquaporin-2 (109 aa).

The Cytoplasmic segment spans residues 1-6 (SIAFSK). Residues 7–27 (AVFSEFLATLLFVFFGLGSAL) form a helical membrane-spanning segment. Topologically, residues 28–35 (NWPQALPS) are extracellular. A helical membrane pass occupies residues 36 to 54 (GLQIAMAFGLAIGTLVQTL). Residues 55–59 (GHISG) are Cytoplasmic-facing. The segment at residues 60 to 69 (AHINPAVTVA) is an intramembrane region (discontinuously helical). Residues 63 to 65 (NPA) carry the NPA 1 motif. Over 70–80 (CLVGCHVSFLR) the chain is Cytoplasmic. A helical transmembrane segment spans residues 81–102 (AIFYVAAQLLGAVAGAALLHEL). Over 103-109 (TPPDIRG) the chain is Extracellular.

Belongs to the MIP/aquaporin (TC 1.A.8) family. In terms of assembly, homotetramer. Serine phosphorylation is necessary and sufficient for expression at the apical membrane. Endocytosis is not phosphorylation-dependent. Post-translationally, N-glycosylated.

The protein resides in the apical cell membrane. It is found in the basolateral cell membrane. The protein localises to the cell membrane. It localises to the cytoplasmic vesicle membrane. Its subcellular location is the golgi apparatus. The protein resides in the trans-Golgi network membrane. The catalysed reaction is H2O(in) = H2O(out). It carries out the reaction glycerol(in) = glycerol(out). Functionally, forms a water-specific channel that provides the plasma membranes of renal collecting duct with high permeability to water, thereby permitting water to move in the direction of an osmotic gradient. Plays an essential role in renal water homeostasis. Could also be permeable to glycerol. This chain is Aquaporin-2, found in Orycteropus afer (Aardvark).